The chain runs to 306 residues: Ornithine carbamoyltransferase (306 aa).

Carbamoyl phosphate contacts are provided by residues 46-49 (STRT), Gln-73, Arg-97, and 124-127 (HPTQ). L-ornithine-binding positions include Asn-156, Asp-220, and 224-225 (SM). Carbamoyl phosphate-binding positions include 260-261 (CL) and Arg-288.

It belongs to the aspartate/ornithine carbamoyltransferase superfamily. OTCase family.

The protein resides in the cytoplasm. It carries out the reaction carbamoyl phosphate + L-ornithine = L-citrulline + phosphate + H(+). It functions in the pathway amino-acid biosynthesis; L-arginine biosynthesis; L-arginine from L-ornithine and carbamoyl phosphate: step 1/3. Functionally, reversibly catalyzes the transfer of the carbamoyl group from carbamoyl phosphate (CP) to the N(epsilon) atom of ornithine (ORN) to produce L-citrulline. This chain is Ornithine carbamoyltransferase, found in Campylobacter jejuni subsp. jejuni serotype O:23/36 (strain 81-176).